The following is a 102-amino-acid chain: Large ribosomal subunit protein bL21 (102 aa).

Belongs to the bacterial ribosomal protein bL21 family. In terms of assembly, part of the 50S ribosomal subunit. Contacts protein L20.

This protein binds to 23S rRNA in the presence of protein L20. This is Large ribosomal subunit protein bL21 from Desulfovibrio desulfuricans (strain ATCC 27774 / DSM 6949 / MB).